The primary structure comprises 423 residues: tRNA(Ile)-lysidine synthase (423 aa).

18–23 lines the ATP pocket; that stretch reads SGGADS.

This sequence belongs to the tRNA(Ile)-lysidine synthase family.

The protein resides in the cytoplasm. The catalysed reaction is cytidine(34) in tRNA(Ile2) + L-lysine + ATP = lysidine(34) in tRNA(Ile2) + AMP + diphosphate + H(+). In terms of biological role, ligates lysine onto the cytidine present at position 34 of the AUA codon-specific tRNA(Ile) that contains the anticodon CAU, in an ATP-dependent manner. Cytidine is converted to lysidine, thus changing the amino acid specificity of the tRNA from methionine to isoleucine. In Aromatoleum aromaticum (strain DSM 19018 / LMG 30748 / EbN1) (Azoarcus sp. (strain EbN1)), this protein is tRNA(Ile)-lysidine synthase.